We begin with the raw amino-acid sequence, 464 residues long: ATP-dependent protease ATPase subunit HslU (464 aa).

ATP-binding positions include Ile-19, 61 to 66 (GVGKTE), Asp-277, Glu-342, and Arg-414.

Belongs to the ClpX chaperone family. HslU subfamily. In terms of assembly, a double ring-shaped homohexamer of HslV is capped on each side by a ring-shaped HslU homohexamer. The assembly of the HslU/HslV complex is dependent on binding of ATP.

The protein resides in the cytoplasm. ATPase subunit of a proteasome-like degradation complex; this subunit has chaperone activity. The binding of ATP and its subsequent hydrolysis by HslU are essential for unfolding of protein substrates subsequently hydrolyzed by HslV. HslU recognizes the N-terminal part of its protein substrates and unfolds these before they are guided to HslV for hydrolysis. The sequence is that of ATP-dependent protease ATPase subunit HslU from Lactobacillus gasseri (strain ATCC 33323 / DSM 20243 / BCRC 14619 / CIP 102991 / JCM 1131 / KCTC 3163 / NCIMB 11718 / NCTC 13722 / AM63).